We begin with the raw amino-acid sequence, 127 residues long: Group 3 truncated hemoglobin ctb (127 aa).

Residues Y64 and H72 each contribute to the heme site.

The protein belongs to the truncated hemoglobin family. Group III subfamily. Monomer. Heme is required as a cofactor.

The protein localises to the cytoplasm. Has been suggested to be involved in cytochrome c peroxidase or P450-like oxygen chemistry or cyanide detoxification. The high oxygen affinity of this protein suggests that it probably does not function as an oxygen transporter. This is Group 3 truncated hemoglobin ctb (ctb) from Campylobacter jejuni subsp. jejuni serotype O:2 (strain ATCC 700819 / NCTC 11168).